Reading from the N-terminus, the 160-residue chain is Probable prefoldin subunit 5 (160 aa).

This sequence belongs to the prefoldin subunit alpha family. Heterohexamer of two PFD-alpha type and four PFD-beta type subunits.

Binds specifically to cytosolic chaperonin (c-CPN) and transfers target proteins to it. Binds to nascent polypeptide chain and promotes folding in an environment in which there are many competing pathways for nonnative proteins. The protein is Probable prefoldin subunit 5 (pfdn5) of Dictyostelium discoideum (Social amoeba).